The primary structure comprises 770 residues: Glutamate carboxypeptidase 2 homolog (770 aa).

Residues 1 to 19 (MPYVGVGAQKASTNLTGGP) lie on the Cytoplasmic side of the membrane. The helical; Signal-anchor for type II membrane protein transmembrane segment at 20 to 40 (MMKAYAFVLAFFLLGLGVLAL) threads the bilayer. The Extracellular portion of the chain corresponds to 41–770 (GKHHSGRRFN…CVVNTLRDVI (730 aa)). N-linked (GlcNAc...) asparagine glycans are attached at residues Asn-175 and Asn-337. A catalytic region spans residues 282 to 597 (SKKELFKGRT…QYWAELAKTF (316 aa)). Residues His-387 and Asp-397 each coordinate Zn(2+). N-linked (GlcNAc...) asparagine glycosylation occurs at Asn-417. Glu-435 (nucleophile) is an active-site residue. Residues Glu-436 and Asp-464 each coordinate Zn(2+). Asn-469 and Asn-551 each carry an N-linked (GlcNAc...) asparagine glycan. His-562 contacts Zn(2+). N-linked (GlcNAc...) asparagine glycans are attached at residues Asn-606 and Asn-630.

This sequence belongs to the peptidase M28 family. M28B subfamily. Zn(2+) serves as cofactor.

It is found in the membrane. It catalyses the reaction Release of an unsubstituted, C-terminal glutamyl residue, typically from Ac-Asp-Glu or folylpoly-gamma-glutamates.. In Caenorhabditis briggsae, this protein is Glutamate carboxypeptidase 2 homolog.